The primary structure comprises 254 residues: Ciliary microtubule associated protein 1A (254 aa).

STPGR repeat units follow at residues 180 to 205 (PGPA…MAAR) and 216 to 241 (PGPG…FGIK). A disordered region spans residues 207–226 (EPPGDKTLKPGPGAHSPEKV).

Belongs to the CIMAP family. As to quaternary structure, microtubule inner protein component of sperm flagellar doublet microtubules. As to expression, testis-specific.

Its subcellular location is the cytoplasm. It localises to the cytoskeleton. The protein resides in the flagellum axoneme. In terms of biological role, outer dense fibers are filamentous structures located on the outside of the axoneme in the midpiece and principal piece of the mammalian sperm tail. May help to maintain the passive elastic structures and elastic recoil of the sperm tail. This Homo sapiens (Human) protein is Ciliary microtubule associated protein 1A.